A 276-amino-acid chain; its full sequence is 4-hydroxy-tetrahydrodipicolinate reductase (276 aa).

An NAD(+)-binding site is contributed by 16-21 (GALGKM). K44 serves as a coordination point for NADP(+). Residues 109 to 111 (GTT) and 135 to 138 (APNF) each bind NAD(+). H165 acts as the Proton donor/acceptor in catalysis. A (S)-2,3,4,5-tetrahydrodipicolinate-binding site is contributed by H166. K169 (proton donor) is an active-site residue. 175–176 (GT) is a binding site for (S)-2,3,4,5-tetrahydrodipicolinate.

The protein belongs to the DapB family.

It is found in the cytoplasm. It carries out the reaction (S)-2,3,4,5-tetrahydrodipicolinate + NAD(+) + H2O = (2S,4S)-4-hydroxy-2,3,4,5-tetrahydrodipicolinate + NADH + H(+). It catalyses the reaction (S)-2,3,4,5-tetrahydrodipicolinate + NADP(+) + H2O = (2S,4S)-4-hydroxy-2,3,4,5-tetrahydrodipicolinate + NADPH + H(+). Its pathway is amino-acid biosynthesis; L-lysine biosynthesis via DAP pathway; (S)-tetrahydrodipicolinate from L-aspartate: step 4/4. Catalyzes the conversion of 4-hydroxy-tetrahydrodipicolinate (HTPA) to tetrahydrodipicolinate. This is 4-hydroxy-tetrahydrodipicolinate reductase from Thermosynechococcus vestitus (strain NIES-2133 / IAM M-273 / BP-1).